The sequence spans 214 residues: Cytochrome b (214 aa).

Helical transmembrane passes span 31 to 51 (FGSMLLSCSMIQIMTGFFLAI), 75 to 96 (WIMQNTHAIGASLFFICIYIHI), 111 to 131 (WLSGTTLLIILMATAFFGYVL), and 176 to 196 (FFALHFILPFAIISMSSIHIL). Residues H81 and H95 each contribute to the heme b site. The heme b site is built by H180 and H194. An a ubiquinone-binding site is contributed by H199.

The protein belongs to the cytochrome b family. The cytochrome bc1 complex contains 3 respiratory subunits (MT-CYB, CYC1 and UQCRFS1), 2 core proteins (UQCRC1 and UQCRC2) and probably 6 low-molecular weight proteins. It depends on heme b as a cofactor.

Its subcellular location is the mitochondrion inner membrane. Component of the ubiquinol-cytochrome c reductase complex (complex III or cytochrome b-c1 complex) that is part of the mitochondrial respiratory chain. The b-c1 complex mediates electron transfer from ubiquinol to cytochrome c. Contributes to the generation of a proton gradient across the mitochondrial membrane that is then used for ATP synthesis. In Trimeresurus stejnegeri (Chinese green tree viper), this protein is Cytochrome b (MT-CYB).